The sequence spans 468 residues: MATEYALRMGDGKRVFLAREKIMEEIEAGTANAADLGEIPALSADEMNKLAEILMMPGKAVSVEHGMEIPVTHDIGTIRLDGDQGNSGVGIPSSRLVGCMMHERAFGADTMELGHIDYSFKPVKPVVANECQAMEVCQQNMIIPLFYGAMPNMGLYYTPDGPFENPGDLMKAFKIQEAWDSMEHAAEHLTRDTIWIMQKLFASGADGVNFDTTAAAGDGDFYGTLHAIEALRKEFPEMYIEAGMAGEMVLGMHGNLQYDGVTLAGLWPHQQAPLVAKAGANVFGPVVNTNTSKTSPWNLARAVTFIKEAVKVSSLPCHVDMGMGVGGIPMLETPPIDAVTRASKAMVEIAGVDGIOIGVGDPLGMPISHIMASGMTGMRAAGDLVARMQFSKNMKIKEAKEYVAKKLNVEIRDLADEYIMRELREELNIGVITSVPGSAKGIAAKMNIEKLLGIKINSCELFRKQTGK.

Pyl-356 is a non-standard amino acid (pyrrolysine).

The protein belongs to the dimethylamine methyltransferase family.

The enzyme catalyses Co(I)-[dimethylamine-specific corrinoid protein] + dimethylamine + H(+) = methyl-Co(III)-[dimethylamine-specific corrinoid protein] + methylamine. It functions in the pathway one-carbon metabolism; methanogenesis from dimethylamine. Its function is as follows. Catalyzes the transfer of a methyl group from dimethylamine to the corrinoid cofactor of MtbC. This chain is Dimethylamine methyltransferase MtbB1 (mtbB1), found in Methanosarcina mazei (strain ATCC BAA-159 / DSM 3647 / Goe1 / Go1 / JCM 11833 / OCM 88) (Methanosarcina frisia).